The primary structure comprises 217 residues: Urease accessory protein UreG (217 aa).

Residues Met1–Pro18 are compositionally biased toward basic residues. The interval Met1–Val24 is disordered. Gly26–Thr33 contacts GTP.

It belongs to the SIMIBI class G3E GTPase family. UreG subfamily. In terms of assembly, homodimer. UreD, UreF and UreG form a complex that acts as a GTP-hydrolysis-dependent molecular chaperone, activating the urease apoprotein by helping to assemble the nickel containing metallocenter of UreC. The UreE protein probably delivers the nickel.

The protein localises to the cytoplasm. In terms of biological role, facilitates the functional incorporation of the urease nickel metallocenter. This process requires GTP hydrolysis, probably effectuated by UreG. This Paraburkholderia xenovorans (strain LB400) protein is Urease accessory protein UreG.